Here is a 233-residue protein sequence, read N- to C-terminus: Pilin-like protein PilA3 (233 aa).

The propeptide at 1 to 4 (MKRG) is leader sequence. F5 bears the N-methylphenylalanine mark. A helical transmembrane segment spans residues 5-25 (FTLVEVLVAMAILVVVLAVGV). The interval 121–143 (LRRSDVNATPSSGSDCTTPPPNS) is disordered. Over residues 126 to 137 (VNATPSSGSDCT) the composition is skewed to polar residues.

Its subcellular location is the cell inner membrane. It localises to the cell outer membrane. The protein resides in the periplasm. Plays an essential role in natural DNA transformation but is not required for pilus biogenesis. The polypeptide is Pilin-like protein PilA3 (pilA3) (Thermus thermophilus (strain ATCC BAA-163 / DSM 7039 / HB27)).